Consider the following 512-residue polypeptide: Respiratory nitrate reductase 1 beta chain (512 aa).

3 consecutive 4Fe-4S ferredoxin-type domains span residues 7–35, 175–206, and 208–237; these read VGMV…SREG, TFMM…KREE, and GIVL…FNWK. [4Fe-4S] cluster contacts are provided by C16, C19, C22, C26, C184, C187, and C192. [3Fe-4S] cluster contacts are provided by C196, C217, and C223. [4Fe-4S] cluster contacts are provided by C227, C244, C247, C259, and C263.

Dimer of heterotrimers each composed of an alpha, a beta and a gamma chain. Alpha and beta are catalytic chains; gamma chains are involved in binding the enzyme complex to the cytoplasmic membrane. Requires [4Fe-4S] cluster as cofactor. [3Fe-4S] cluster serves as cofactor.

It localises to the cell membrane. The enzyme catalyses nitrate + a quinol = a quinone + nitrite + H2O. Functionally, the nitrate reductase enzyme complex allows E.coli to use nitrate as an electron acceptor during anaerobic growth. The beta chain is an electron transfer unit containing four cysteine clusters involved in the formation of iron-sulfur centers. Electrons are transferred from the gamma chain to the molybdenum cofactor of the alpha subunit. The polypeptide is Respiratory nitrate reductase 1 beta chain (narH) (Escherichia coli (strain K12)).